The chain runs to 386 residues: Homoserine O-succinyltransferase (386 aa).

In terms of domain architecture, AB hydrolase-1 spans Asn49–Leu358. Ser156 (nucleophile) is an active-site residue. Position 226 (Arg226) interacts with substrate. Catalysis depends on residues Asp321 and His354. Asp355 is a substrate binding site.

The protein belongs to the AB hydrolase superfamily. MetX family. In terms of assembly, homodimer.

The protein resides in the cytoplasm. It carries out the reaction L-homoserine + succinyl-CoA = O-succinyl-L-homoserine + CoA. It functions in the pathway amino-acid biosynthesis; L-methionine biosynthesis via de novo pathway; O-succinyl-L-homoserine from L-homoserine: step 1/1. In terms of biological role, transfers a succinyl group from succinyl-CoA to L-homoserine, forming succinyl-L-homoserine. The polypeptide is Homoserine O-succinyltransferase (Acinetobacter baumannii (strain ACICU)).